The chain runs to 521 residues: Cytochrome P450 monooxygenase ABA2 (521 aa).

The chain crosses the membrane as a helical span at residues 15–35; it reads AGHLGMAVTFTILVAFTIHVL. A glycan (N-linked (GlcNAc...) asparagine) is linked at Asn-366. Position 458 (Cys-458) interacts with heme.

It belongs to the cytochrome P450 family. Requires heme as cofactor.

The protein resides in the membrane. The protein operates within hormone biosynthesis. Its function is as follows. Cytochrome P450 monooxygenase involved in the biosynthesis of abscisic acid (ABA), a phytohormone that acts antagonistically toward salicylic acid (SA), jasmonic acid (JA) and ethylene (ETH) signaling, to impede plant defense responses. During pathogen-host interaction, ABA plays a dual role in disease severity by increasing plant susceptibility and accelerating pathogenesis in the fungus itself. The first step of the pathway catalyzes the reaction from farnesyl diphosphate to alpha-ionylideneethane performed by the alpha-ionylideneethane synthase ABA3 via a three-step reaction mechanism involving 2 neutral intermediates, beta-farnesene and allofarnesene. The cytochrome P450 monooxygenase ABA1 might then be involved in the conversion of alpha-ionylideneethane to alpha-ionylideneacetic acid. Alpha-ionylideneacetic acid is further converted to abscisic acid in 2 steps involving the cytochrome P450 monooxygenase ABA2 and the short-chain dehydrogenase/reductase ABA4, via the intermediates 1'-deoxy-ABA or 1',4'-trans-diol-ABA, depending on the order of action of these 2 enzymes. ABA2 is responsible for the hydroxylation of carbon atom C-1' and ABA4 might be involved in the oxidation of the C-4' carbon atom. This chain is Cytochrome P450 monooxygenase ABA2, found in Pyricularia oryzae (strain 70-15 / ATCC MYA-4617 / FGSC 8958) (Rice blast fungus).